The primary structure comprises 238 residues: Large ribosomal subunit protein uL5c (238 aa).

This sequence belongs to the universal ribosomal protein uL5 family. As to quaternary structure, part of the 50S ribosomal subunit; contacts the 5S rRNA.

It localises to the plastid. It is found in the chloroplast. Binds 5S rRNA, forms part of the central protuberance of the 50S subunit. In Trieres chinensis (Marine centric diatom), this protein is Large ribosomal subunit protein uL5c (rpl5).